The primary structure comprises 591 residues: Glutathione S-transferase T2 (591 aa).

A GST N-terminal domain is found at 1–82 (MKLKVYADRM…YLSSAYASVV (82 aa)). Glutathione-binding positions include 11–12 (SQ), 40–41 (QL), 53–54 (KV), and 66–67 (ES). Residues 89–226 (DLSKRAKIHS…EVLFRAKDRF (138 aa)) enclose the GST C-terminal domain. The disordered stretch occupies residues 229–272 (QREMATASKPGPQSKIIQFSSIGGTSDGPNLVQDTTDRKARRRK). Positions 243–262 (KIIQFSSIGGTSDGPNLVQD) are enriched in polar residues. In terms of domain architecture, Myb-like spans 265–338 (DRKARRRKWS…HCRQRWRKIN (74 aa)).

Belongs to the GST superfamily. Theta family.

It localises to the peroxisome. The enzyme catalyses RX + glutathione = an S-substituted glutathione + a halide anion + H(+). May be involved in the conjugation of reduced glutathione to a wide number of exogenous and endogenous hydrophobic electrophiles and have a detoxification role against certain herbicides. This Arabidopsis thaliana (Mouse-ear cress) protein is Glutathione S-transferase T2 (GSTT2).